The chain runs to 224 residues: DNA mismatch repair protein MutH (224 aa).

This sequence belongs to the MutH family.

The protein localises to the cytoplasm. Functionally, sequence-specific endonuclease that cleaves unmethylated GATC sequences. It is involved in DNA mismatch repair. This Shewanella amazonensis (strain ATCC BAA-1098 / SB2B) protein is DNA mismatch repair protein MutH.